The chain runs to 106 residues: Tripartite terminase subunit 2 (106 aa).

This sequence belongs to the herpesviridae TRM2 protein family. In terms of assembly, associates with TRM1 and TRM3 to form the tripartite terminase complex.

Its subcellular location is the host nucleus. In terms of biological role, component of the molecular motor that translocates viral genomic DNA in empty capsid during DNA packaging. Forms a tripartite terminase complex together with TRM1 and TRM3 in the host cytoplasm. Once the complex reaches the host nucleus, it interacts with the capsid portal vertex. This portal forms a ring in which genomic DNA is translocated into the capsid. This is Tripartite terminase subunit 2 from Human herpesvirus 6A (strain Uganda-1102) (HHV-6 variant A).